We begin with the raw amino-acid sequence, 546 residues long: MQFVEFAEICNTIEGTSSRLATADILAEKFPLLTEEELPVFVRFMRGRLFPDWSSEKLGFGPNLLYDALAYVIGKKRSYVVSAINNAGDIGKVVESLIEKREQTMFFSEELDLLDVNARFLQMAKSSGRRSQQERLRSAQYLLSNATPLEGRYLARLMLEEMRIGVGEGVVKDAVSKAFGVPSDIVEHAHQALNDLGEVAFLAKTDPSRLSNVHITAFRPVKMMLAQQGSITSMVETHGTLAAENKYDGSRFQFHKSGGKCAIYSRRLEEMTASLPDVVKMLDKATDHDVIIDGEVIAIMNGKPMPFQTILRRIRRKHDVGDAQEAITLLPWVFDILAADGETLIDLPFRERRKILESVMNAYVAPQLVSDSAEEIEAYYHSSLDNGNEGIMLKVLDSPYLPGNRGKLWIKIKPEVDTIDLVVTAAEWGEGKRAKMFGSFLLACQDENGDLLEISRVATGIDDSMLSTLYDLFKDKIIAEKGKTVTFEPDVVFEVGYAELQKSTNYEAGYALRFPRFVRLRDDKDVSEIETLESLTRRYSLQNKEE.

Position 244 (Glu244) interacts with ATP. Lys246 acts as the N6-AMP-lysine intermediate in catalysis. Arg251, Arg266, Glu295, Phe334, Arg405, and Lys411 together coordinate ATP.

This sequence belongs to the ATP-dependent DNA ligase family. Mg(2+) serves as cofactor.

The enzyme catalyses ATP + (deoxyribonucleotide)n-3'-hydroxyl + 5'-phospho-(deoxyribonucleotide)m = (deoxyribonucleotide)n+m + AMP + diphosphate.. Its function is as follows. DNA ligase that seals nicks in double-stranded DNA during DNA replication, DNA recombination and DNA repair. In Methanocorpusculum labreanum (strain ATCC 43576 / DSM 4855 / Z), this protein is DNA ligase.